Consider the following 443-residue polypeptide: Thymidine phosphorylase (443 aa).

Belongs to the thymidine/pyrimidine-nucleoside phosphorylase family. In terms of assembly, homodimer.

It catalyses the reaction thymidine + phosphate = 2-deoxy-alpha-D-ribose 1-phosphate + thymine. It functions in the pathway pyrimidine metabolism; dTMP biosynthesis via salvage pathway; dTMP from thymine: step 1/2. Its function is as follows. The enzymes which catalyze the reversible phosphorolysis of pyrimidine nucleosides are involved in the degradation of these compounds and in their utilization as carbon and energy sources, or in the rescue of pyrimidine bases for nucleotide synthesis. The chain is Thymidine phosphorylase from Aeromonas hydrophila subsp. hydrophila (strain ATCC 7966 / DSM 30187 / BCRC 13018 / CCUG 14551 / JCM 1027 / KCTC 2358 / NCIMB 9240 / NCTC 8049).